Consider the following 540-residue polypeptide: Alanine aminotransferase 2 (540 aa).

N6-(pyridoxal phosphate)lysine is present on Lys-358.

Belongs to the class-I pyridoxal-phosphate-dependent aminotransferase family. Alanine aminotransferase subfamily. As to quaternary structure, homodimer. It depends on pyridoxal 5'-phosphate as a cofactor.

The catalysed reaction is L-alanine + 2-oxoglutarate = pyruvate + L-glutamate. Its pathway is amino-acid degradation; L-alanine degradation via transaminase pathway; pyruvate from L-alanine: step 1/1. Functionally, catalyzes the reversible transamination between alanine and 2-oxoglutarate to form pyruvate and glutamate. The polypeptide is Alanine aminotransferase 2 (gpt2) (Xenopus laevis (African clawed frog)).